The sequence spans 435 residues: N-lysine methyltransferase SMYD2-A (435 aa).

The SET domain occupies 7–241 (EGTERFLSPG…PEEEIFNSYI (235 aa)). 17-19 (KGR) contacts S-adenosyl-L-methionine. Residues C52, C55, C65, C68, C74, C78, H86, and C90 each contribute to the Zn(2+) site. An MYND-type zinc finger spans residues 52–90 (CECCFTRKEGLSKCGKCKQAYYCNVECQRGDWPMHKLEC). S-adenosyl-L-methionine contacts are provided by residues H137, 206 to 207 (NH), and 258 to 260 (YFF).

This sequence belongs to the class V-like SAM-binding methyltransferase superfamily.

The protein resides in the cytoplasm. Its subcellular location is the cytosol. It is found in the nucleus. The enzyme catalyses L-lysyl(4)-[histone H3] + 3 S-adenosyl-L-methionine = N(6),N(6),N(6)-trimethyl-L-lysyl(4)-[histone H3] + 3 S-adenosyl-L-homocysteine + 3 H(+). The catalysed reaction is L-lysyl-[protein] + S-adenosyl-L-methionine = N(6)-methyl-L-lysyl-[protein] + S-adenosyl-L-homocysteine + H(+). Protein-lysine N-methyltransferase that methylates both histones and non-histone proteins, including p53/TP53 and RB1. Specifically trimethylates histone H3 'Lys-4' (H3K4me3) in vivo. The activity requires interaction with HSP90alpha. Shows even higher methyltransferase activity on p53/TP53. Monomethylates 'Lys-370' of p53/TP53, leading to decreased DNA-binding activity and subsequent transcriptional regulation activity of p53/TP53. Monomethylates RB1 at 'Lys-860'. In Danio rerio (Zebrafish), this protein is N-lysine methyltransferase SMYD2-A (smyd2a).